The sequence spans 550 residues: Arginine--tRNA ligase (550 aa).

Positions 130-140 (ANPTGPIHIGG) match the 'HIGH' region motif.

Belongs to the class-I aminoacyl-tRNA synthetase family. In terms of assembly, monomer.

It localises to the cytoplasm. It carries out the reaction tRNA(Arg) + L-arginine + ATP = L-arginyl-tRNA(Arg) + AMP + diphosphate. The chain is Arginine--tRNA ligase from Mycolicibacterium gilvum (strain PYR-GCK) (Mycobacterium gilvum (strain PYR-GCK)).